A 446-amino-acid chain; its full sequence is Transcription factor Dp-2 (446 aa).

An N-acetylthreonine modification is found at Thr2. Phosphoserine; by CDK2 is present on residues Ser24 and Ser42. The tract at residues 60–82 is interaction with CEBPA; that stretch reads PQMIISTPQRIANSGSVLIGNPY. Residues 103–118 carry the Nuclear localization signal motif; the sequence is SDRKRAREFIDSDFSE. At Ser122 the chain carries Phosphoserine. A DNA-binding region spans residues 129-210; the sequence is GKGLRHFSMK…PTGKKRNQVD (82 aa). Residues 176–210 carry the DEF box motif; that stretch reads DQENIRRRVYDALNVLMAMNIISSLPTGKKRNQVD. The dimerization stretch occupies residues 219–292; the sequence is NLEIEKQRRI…RKTVIDCSIS (74 aa). The DCB1 stretch occupies residues 229–261; sequence ERIKQKRAQLQELLLQQIAFKNLVQRNRQNEQQ. The interval 274 to 330 is DCB2; sequence LPFIIINTSRKTVIDCSISSDKFEYLFNFDNTFEIHDDIEVLKRMGMSFGLESGKCS. Positions 404-446 are disordered; sequence LPASNSHQSSSAASHFSESRGETPCSFNDEDEEDEEEDPSSPE. Over residues 406-419 the composition is skewed to low complexity; sequence ASNSHQSSSAASHF. The span at 431-446 shows a compositional bias: acidic residues; the sequence is NDEDEEDEEEDPSSPE.

The protein belongs to the E2F/DP family. As to quaternary structure, component of the DRTF1/E2F transcription factor complex. Forms heterodimers with E2F family members. The complex can interact with hypophosphorylated retinoblastoma protein RB1 and related proteins (RBL1 and RBL2) that inhibit the E2F transactivation domain. During the cell cycle, RB becomes phosphorylated in mid-to-late G1 phase, detaches from the DRTF1/E2F complex rendering E2F transcriptionally active. Interacts with GMCL. Component of the DREAM complex (also named LINC complex) at least composed of E2F4, E2F5, LIN9, LIN37, LIN52, LIN54, MYBL1, MYBL2, RBL1, RBL2, RBBP4, TFDP1 and TFDP2. The complex exists in quiescent cells where it represses cell cycle-dependent genes. It dissociates in S phase when LIN9, LIN37, LIN52 and LIN54 form a subcomplex that binds to MYBL2. The complex TFDP2:E2F1 interacts with CEBPA; the interaction prevents CEBPA binding to target gene promoters and represses its transcriptional activity. Phosphorylation by E2F1-bound cyclin A-CDK2, in the S phase, inhibits E2F-mediated DNA binding and transactivation. In terms of tissue distribution, expressed in all tissues examined. Highest levels in spleen and heart.

It localises to the nucleus. Functionally, can stimulate E2F-dependent transcription. Binds DNA cooperatively with E2F family members through the E2 recognition site, 5'-TTTC[CG]CGC-3', found in the promoter region of a number of genes whose products are involved in cell cycle regulation or in DNA replication. The TFDP2:E2F complex functions in the control of cell-cycle progression from G1 to S phase. The E2F1:DP complex appears to mediate both cell proliferation and apoptosis. Blocks adipocyte differentiation by repressing CEBPA binding to its target gene promoters. In Mus musculus (Mouse), this protein is Transcription factor Dp-2 (Tfdp2).